The sequence spans 188 residues: Vascular endothelial growth factor A-A (188 aa).

An N-terminal signal peptide occupies residues 1–23 (MNLVVYLIQLFLAALLHLSAVKA). 3 cysteine pairs are disulfide-bonded: Cys-49–Cys-91, Cys-80–Cys-125, and Cys-84–Cys-127. The N-linked (GlcNAc...) asparagine glycan is linked to Asn-98.

It belongs to the PDGF/VEGF growth factor family. Homodimer; disulfide-linked. Isoform VEGF165 binds kdr and kdrl. Predominantly expressed in regions associated with active vascularization. From 15-16 hours post-fertilization (hpf), expressed in the anterior forebrain, the mesoderm underlying and lateral to the anterior hindbrain, the mesoderm underlying and lateral to the posterior hindbrain, and in the ventral medial portions of the somites. By 30-36 hpf, expression in the somites is decreased, while strong expression is observed in the region of the developing glomeruli and in the anterior portion of the pronephric ducts, the pharyngeal arches, and the brain. By 72 hpf, expression remains only in the pronephros region.

It is found in the secreted. Growth factor active in angiogenesis, vasculogenesis and endothelial cell growth. Induces endothelial cell proliferation, promotes cell migration, inhibits apoptosis, and induces permeabilization of blood vessels. Required for intersegmental vessel development in the tail during embryogenesis. Acts both upstream of kdr and tie1 to stimulate endothelial cell differentiation, and upstream of gata1 to stimulate hematopoietic cell differentiation. In Danio rerio (Zebrafish), this protein is Vascular endothelial growth factor A-A (vegfaa).